We begin with the raw amino-acid sequence, 308 residues long: Aspartate carbamoyltransferase catalytic subunit (308 aa).

Carbamoyl phosphate is bound by residues Arg55 and Thr56. Lys83 is an L-aspartate binding site. Carbamoyl phosphate-binding residues include Arg105, His133, and Gln136. The L-aspartate site is built by Arg166 and Arg220. The carbamoyl phosphate site is built by Gly261 and Pro262.

The protein belongs to the aspartate/ornithine carbamoyltransferase superfamily. ATCase family. In terms of assembly, heterododecamer (2C3:3R2) of six catalytic PyrB chains organized as two trimers (C3), and six regulatory PyrI chains organized as three dimers (R2).

The enzyme catalyses carbamoyl phosphate + L-aspartate = N-carbamoyl-L-aspartate + phosphate + H(+). It participates in pyrimidine metabolism; UMP biosynthesis via de novo pathway; (S)-dihydroorotate from bicarbonate: step 2/3. Catalyzes the condensation of carbamoyl phosphate and aspartate to form carbamoyl aspartate and inorganic phosphate, the committed step in the de novo pyrimidine nucleotide biosynthesis pathway. This Chlorobaculum parvum (strain DSM 263 / NCIMB 8327) (Chlorobium vibrioforme subsp. thiosulfatophilum) protein is Aspartate carbamoyltransferase catalytic subunit.